The chain runs to 235 residues: 7-cyano-7-deazaguanine synthase (235 aa).

Residue 16–26 participates in ATP binding; sequence FSGGQDSTTCL. Zn(2+) contacts are provided by cysteine 195, cysteine 204, cysteine 207, and cysteine 210.

The protein belongs to the QueC family. It depends on Zn(2+) as a cofactor.

It catalyses the reaction 7-carboxy-7-deazaguanine + NH4(+) + ATP = 7-cyano-7-deazaguanine + ADP + phosphate + H2O + H(+). The protein operates within purine metabolism; 7-cyano-7-deazaguanine biosynthesis. Functionally, catalyzes the ATP-dependent conversion of 7-carboxy-7-deazaguanine (CDG) to 7-cyano-7-deazaguanine (preQ(0)). The polypeptide is 7-cyano-7-deazaguanine synthase (Shewanella frigidimarina (strain NCIMB 400)).